We begin with the raw amino-acid sequence, 91 residues long: UPF0213 protein NMC1807 (91 aa).

One can recognise a GIY-YIG domain in the interval 4–83; sequence SNWSVYLILC…AAQKRQLWEQ (80 aa).

This sequence belongs to the UPF0213 family.

This is UPF0213 protein NMC1807 from Neisseria meningitidis serogroup C / serotype 2a (strain ATCC 700532 / DSM 15464 / FAM18).